Consider the following 784-residue polypeptide: LPS-assembly protein LptD (784 aa).

The N-terminal stretch at 1 to 24 (MKKRIPTLLATMIASALYSHQGLA) is a signal peptide. 2 disulfide bridges follow: Cys31/Cys724 and Cys173/Cys725.

It belongs to the LptD family. As to quaternary structure, component of the lipopolysaccharide transport and assembly complex. Interacts with LptE and LptA. Contains two intramolecular disulfide bonds.

The protein localises to the cell outer membrane. Together with LptE, is involved in the assembly of lipopolysaccharide (LPS) at the surface of the outer membrane. The polypeptide is LPS-assembly protein LptD (Salmonella typhi).